The sequence spans 223 residues: Adenine phosphoribosyltransferase (223 aa).

This sequence belongs to the purine/pyrimidine phosphoribosyltransferase family. In terms of assembly, homodimer.

It localises to the cytoplasm. It catalyses the reaction AMP + diphosphate = 5-phospho-alpha-D-ribose 1-diphosphate + adenine. It functions in the pathway purine metabolism; AMP biosynthesis via salvage pathway; AMP from adenine: step 1/1. Functionally, catalyzes a salvage reaction resulting in the formation of AMP, that is energically less costly than de novo synthesis. The polypeptide is Adenine phosphoribosyltransferase (Mycobacterium bovis (strain ATCC BAA-935 / AF2122/97)).